We begin with the raw amino-acid sequence, 128 residues long: UPF0102 protein MAV_3752 (128 aa).

This sequence belongs to the UPF0102 family.

This Mycobacterium avium (strain 104) protein is UPF0102 protein MAV_3752.